A 225-amino-acid polypeptide reads, in one-letter code: UPF0758 protein swp_2203 (225 aa).

The 123-residue stretch at Ile102 to Ile224 folds into the MPN domain. His173, His175, and Asp186 together coordinate Zn(2+). The JAMM motif motif lies at His173–Asp186.

It belongs to the UPF0758 family.

This Shewanella piezotolerans (strain WP3 / JCM 13877) protein is UPF0758 protein swp_2203.